The chain runs to 379 residues: Mannan endo-1,4-beta-mannosidase 7 (379 aa).

Positions 64 and 179 each coordinate substrate. The Proton donor role is filled by glutamate 180. Tyrosine 260 is a substrate binding site. Glutamate 300 functions as the Nucleophile in the catalytic mechanism. Tryptophan 342 contributes to the substrate binding site.

It belongs to the glycosyl hydrolase 5 (cellulase A) family. Expression not detected.

The catalysed reaction is Random hydrolysis of (1-&gt;4)-beta-D-mannosidic linkages in mannans, galactomannans and glucomannans.. The protein is Mannan endo-1,4-beta-mannosidase 7 (MAN7) of Oryza sativa subsp. japonica (Rice).